Consider the following 143-residue polypeptide: Nucleoside diphosphate kinase (143 aa).

ATP contacts are provided by Lys11, Phe59, Arg87, Thr93, Arg104, and Asn114. His117 functions as the Pros-phosphohistidine intermediate in the catalytic mechanism.

This sequence belongs to the NDK family. In terms of assembly, homotetramer. Mg(2+) is required as a cofactor.

The protein localises to the cytoplasm. The catalysed reaction is a 2'-deoxyribonucleoside 5'-diphosphate + ATP = a 2'-deoxyribonucleoside 5'-triphosphate + ADP. It carries out the reaction a ribonucleoside 5'-diphosphate + ATP = a ribonucleoside 5'-triphosphate + ADP. Its function is as follows. Major role in the synthesis of nucleoside triphosphates other than ATP. The ATP gamma phosphate is transferred to the NDP beta phosphate via a ping-pong mechanism, using a phosphorylated active-site intermediate. This is Nucleoside diphosphate kinase from Shewanella sediminis (strain HAW-EB3).